Consider the following 330-residue polypeptide: MLEPVGERPQLWRAELIVKHIPRKRFGQHFLTDQGIIEGIVQAIAPRAGQAVVEIGPGLAALTQPLVERLGHLTVIELDRDLAQQLRAHPQLTVVESDVLKVDFRQLAERLQHGPVRSAGLPQAETAPKGLEPAGSSSQQGPRDWLRQTAGAAAPSRGSAVHEVTSVGAHKLRVVGNLPYNISTPILFHLLDAVDVIEDQHFMLQKEVIDRMVAAPSTSDYGRLSVMLQWRYAMENVLFVPPQSFDPPPRVDSAVVRMVPHAHPAALDVKLLSQLVQVAFSQRRKLLRHTLGQWLTARGFPGAFDVQRRAEEVPVAEYVALAQQVAAMAV.

Residues H29, L31, G56, E77, and D98 each coordinate S-adenosyl-L-methionine. The interval 115–158 (PVRSAGLPQAETAPKGLEPAGSSSQQGPRDWLRQTAGAAAPSRG) is disordered. An S-adenosyl-L-methionine-binding site is contributed by N177.

It belongs to the class I-like SAM-binding methyltransferase superfamily. rRNA adenine N(6)-methyltransferase family. RsmA subfamily.

It is found in the cytoplasm. It carries out the reaction adenosine(1518)/adenosine(1519) in 16S rRNA + 4 S-adenosyl-L-methionine = N(6)-dimethyladenosine(1518)/N(6)-dimethyladenosine(1519) in 16S rRNA + 4 S-adenosyl-L-homocysteine + 4 H(+). In terms of biological role, specifically dimethylates two adjacent adenosines (A1518 and A1519) in the loop of a conserved hairpin near the 3'-end of 16S rRNA in the 30S particle. May play a critical role in biogenesis of 30S subunits. This chain is Ribosomal RNA small subunit methyltransferase A, found in Polaromonas sp. (strain JS666 / ATCC BAA-500).